The primary structure comprises 79 residues: UPF0349 protein GTNG_2908 (79 aa).

Belongs to the UPF0349 family.

This chain is UPF0349 protein GTNG_2908, found in Geobacillus thermodenitrificans (strain NG80-2).